We begin with the raw amino-acid sequence, 157 residues long: MIITAIDTNIYDQPEFVEGRDVIGVRFEDLVLDKRIQRVALPGGEELGLRLNHGHPILREGDVLKADDKTVFVVEIIPTDVLVITPSDIHQMGFVAHSLGNRHLPAQFSKPGELTEKAAMIVQYDHTVVSFLDEHGIEYQRTELVPPIPFRHSGHTH.

It belongs to the UreE family.

The protein resides in the cytoplasm. Functionally, involved in urease metallocenter assembly. Binds nickel. Probably functions as a nickel donor during metallocenter assembly. This Corynebacterium glutamicum (strain ATCC 13032 / DSM 20300 / JCM 1318 / BCRC 11384 / CCUG 27702 / LMG 3730 / NBRC 12168 / NCIMB 10025 / NRRL B-2784 / 534) protein is Urease accessory protein UreE.